Here is a 111-residue protein sequence, read N- to C-terminus: CRIB domain-containing protein RIC2 (111 aa).

One can recognise a CRIB domain in the interval 71–84 (IGFPTDVKHLSHIG).

Interacts with ARAC11/ROP1. In terms of tissue distribution, expressed in roots, leaves, stems, flowers, siliques and pollen.

The protein localises to the cell membrane. Functionally, functions as a downstream effector of Rho-related GTP binding proteins of the 'Rho of Plants' (ROPs) family. Participates in the propagation of ROP GTPase signals in specific cellular responses. Is involved in pollen tube growth regulation through its interaction with ARAC11/ROP1. The chain is CRIB domain-containing protein RIC2 (RIC2) from Arabidopsis thaliana (Mouse-ear cress).